Here is a 406-residue protein sequence, read N- to C-terminus: Imidazolonepropionase (406 aa).

Residues H75 and H77 each coordinate Fe(3+). 2 residues coordinate Zn(2+): H75 and H77. The 4-imidazolone-5-propanoate site is built by R84, Y147, and H180. Y147 lines the N-formimidoyl-L-glutamate pocket. Residue H245 coordinates Fe(3+). Residue H245 coordinates Zn(2+). 4-imidazolone-5-propanoate is bound at residue Q248. D320 provides a ligand contact to Fe(3+). D320 is a binding site for Zn(2+). Residues N322 and G324 each coordinate N-formimidoyl-L-glutamate. A 4-imidazolone-5-propanoate-binding site is contributed by T325.

It belongs to the metallo-dependent hydrolases superfamily. HutI family. The cofactor is Zn(2+). It depends on Fe(3+) as a cofactor.

It is found in the cytoplasm. The catalysed reaction is 4-imidazolone-5-propanoate + H2O = N-formimidoyl-L-glutamate. It participates in amino-acid degradation; L-histidine degradation into L-glutamate; N-formimidoyl-L-glutamate from L-histidine: step 3/3. Catalyzes the hydrolytic cleavage of the carbon-nitrogen bond in imidazolone-5-propanoate to yield N-formimidoyl-L-glutamate. It is the third step in the universal histidine degradation pathway. In Hyphomonas neptunium (strain ATCC 15444), this protein is Imidazolonepropionase.